The sequence spans 186 residues: PR-toxin biosynthesis cluster protein 7 (186 aa).

Residues 24-43 traverse the membrane as a helical segment; it reads LGEVTTGGVTPRGTFIFCPI.

Its subcellular location is the membrane. It participates in sesquiterpene biosynthesis. Functionally, part of the gene cluster that mediates the biosynthesis of PR-toxin, a bicyclic sesquiterpene belonging to the eremophilane class and acting as a mycotoxin. The first step of the pathway is catalyzed by the aristolochene synthase which performs the cyclization of trans,trans-farnesyl diphosphate (FPP) to the bicyclic sesquiterpene aristolochene. Following the formation of aristolochene, the non-oxygenated aristolochene is converted to the trioxygenated intermediate eremofortin B, via 7-epi-neopetasone. This conversion appears to involve three enzymes, a hydroxysterol oxidase-like enzyme, the quinone-oxidase prx3 that forms the quinone-type-structure in the bicyclic nucleus of aristolochene with the C8-oxo group and the C-3 hydroxyl group, and the P450 monooxygenase ORF6 that introduces the epoxide at the double bond between carbons 1 and 2. No monoxy or dioxy-intermediates have been reported to be released to the broth, so these three early oxidative reactions may be coupled together. Eremofortin B is further oxidized by another P450 monooxygenase, that introduces a second epoxide between carbons 7 and 11 prior to acetylation to eremofortin A by the acetyltransferase ORF8. The second epoxidation may be performed by a second P450 monooxygenase. After the acetylation step, eremofortin A is converted to eremofortin C and then to PR-toxin. First the conversion of eremofortin A to eremofortin C proceeds by oxidation of the side chain of the molecule at C-12 and is catalyzed by the short-chain oxidoreductase prx1. The cytochrome P450 monooxygenase ORF6 is probably also involved in this step. The primary alcohol formed at C-12 is finally oxidized by the short-chain alcohol dehydrogenase prx4 that forms PR-toxin. The protein is PR-toxin biosynthesis cluster protein 7 of Penicillium roqueforti (strain FM164).